We begin with the raw amino-acid sequence, 195 residues long: Large ribosomal subunit protein uL11m (195 aa).

This sequence belongs to the universal ribosomal protein uL11 family. In terms of assembly, component of the mitochondrial ribosome large subunit (39S) which comprises a 16S rRNA and about 50 distinct proteins.

The protein resides in the mitochondrion. This chain is Large ribosomal subunit protein uL11m (mrpl-11), found in Caenorhabditis elegans.